Reading from the N-terminus, the 245-residue chain is Gas vesicle protein F (245 aa).

The protein belongs to the gas vesicle GvpF/GvpL family. Binds GvpA.

Its subcellular location is the gas vesicle. In terms of biological role, a minor component of the gas vesicle, may be involved in preventing GvpA aggregation during gas vesicle nucleation. Gas vesicles (GV) are hollow, gas filled proteinaceous nanostructures. During planktonic growth they allow positioning of the organism at a favorable depth for light or nutrient acquisition. This chain is Gas vesicle protein F, found in Dolichospermum flosaquae (Anabaena flos-aquae).